The chain runs to 146 residues: Hemoglobin cathodic subunit beta (146 aa).

The region spanning 2 to 146 is the Globin domain; the sequence is QWSSSERSVI…VVSGLSKQYF (145 aa). H63 contributes to the heme b binding site.

In terms of assembly, heterotetramer of two alpha and two beta chains. As to expression, red blood cells.

Functionally, involved in oxygen transport from the gills to various peripheral tissues. This is Hemoglobin cathodic subunit beta from Ophisurus serpens (Serpent eel).